Consider the following 901-residue polypeptide: Protein translocase subunit SecA (901 aa).

ATP contacts are provided by residues Q87, 105–109, and D512; that span reads GEGKT. Residues C885, C887, C896, and H897 each contribute to the Zn(2+) site.

This sequence belongs to the SecA family. As to quaternary structure, monomer and homodimer. Part of the essential Sec protein translocation apparatus which comprises SecA, SecYEG and auxiliary proteins SecDF-YajC and YidC. Zn(2+) is required as a cofactor.

It is found in the cell inner membrane. The protein resides in the cytoplasm. It carries out the reaction ATP + H2O + cellular proteinSide 1 = ADP + phosphate + cellular proteinSide 2.. Part of the Sec protein translocase complex. Interacts with the SecYEG preprotein conducting channel. Has a central role in coupling the hydrolysis of ATP to the transfer of proteins into and across the cell membrane, serving both as a receptor for the preprotein-SecB complex and as an ATP-driven molecular motor driving the stepwise translocation of polypeptide chains across the membrane. In Salmonella typhi, this protein is Protein translocase subunit SecA.